A 128-amino-acid polypeptide reads, in one-letter code: L-ectoine synthase (128 aa).

It belongs to the ectoine synthase family.

The catalysed reaction is (2S)-4-acetamido-2-aminobutanoate = L-ectoine + H2O. It functions in the pathway amine and polyamine biosynthesis; ectoine biosynthesis; L-ectoine from L-aspartate 4-semialdehyde: step 3/3. Its function is as follows. Catalyzes the circularization of gamma-N-acetyl-alpha,gamma-diaminobutyric acid (ADABA) to ectoine (1,4,5,6-tetrahydro-2-methyl-4-pyrimidine carboxylic acid), which is an excellent osmoprotectant. This Vibrio campbellii (strain ATCC BAA-1116) protein is L-ectoine synthase.